The sequence spans 426 residues: Crinkler effector protein 4 (426 aa).

An LQLFLAK domain region spans residues 20-57; that stretch reads VEIDDSAKVSKLKKVIKEENPATITCDAKDLQLFLAKK. Residues 59–107 are DWL domain; sequence DAWLDGAGAAAVELDEHGHPQGCVQMDPTLWVKNPKHFGDNFQPGEGQV. The short motif at 108 to 114 is the HVLVXXP motif element; sequence HVLVVVP. Residues 115–426 form an effector domain region; sequence EGVVGSASET…RSIPTLSYFS (312 aa).

Belongs to the Crinkler effector family.

It localises to the secreted. The protein localises to the host nucleus. Its function is as follows. Secreted effector that is critical to pathogenesis by suppressing plant immune responsess. Promotes Phytophthora infection by suppressing the H(2)O(2) accumulation and callose deposition. May induce cell death by regulating expression of cell death-related genes. This Phytophthora capsici protein is Crinkler effector protein 4.